The sequence spans 122 residues: LYR motif-containing protein 1 (122 aa).

The protein belongs to the complex I LYR family. As to expression, high levels in adipose tissue.

The protein localises to the nucleus. Functionally, may promote cell proliferation and inhibition of apoptosis of preadipocytes. This Homo sapiens (Human) protein is LYR motif-containing protein 1 (LYRM1).